The following is a 595-amino-acid chain: Aspartate--tRNA(Asp/Asn) ligase (595 aa).

E178 contributes to the L-aspartate binding site. An aspartate region spans residues 202-205 (QIFK). R224 is an L-aspartate binding site. ATP contacts are provided by residues 224 to 226 (RDE) and Q233. L-aspartate is bound at residue H458. E488 provides a ligand contact to ATP. R495 provides a ligand contact to L-aspartate. 540–543 (GIDR) lines the ATP pocket.

This sequence belongs to the class-II aminoacyl-tRNA synthetase family. Type 1 subfamily. As to quaternary structure, homodimer.

The protein localises to the cytoplasm. The catalysed reaction is tRNA(Asx) + L-aspartate + ATP = L-aspartyl-tRNA(Asx) + AMP + diphosphate. Its function is as follows. Aspartyl-tRNA synthetase with relaxed tRNA specificity since it is able to aspartylate not only its cognate tRNA(Asp) but also tRNA(Asn). Reaction proceeds in two steps: L-aspartate is first activated by ATP to form Asp-AMP and then transferred to the acceptor end of tRNA(Asp/Asn). The sequence is that of Aspartate--tRNA(Asp/Asn) ligase from Acaryochloris marina (strain MBIC 11017).